The chain runs to 110 residues: Large ribosomal subunit protein uL22 (110 aa).

This sequence belongs to the universal ribosomal protein uL22 family. In terms of assembly, part of the 50S ribosomal subunit.

Its function is as follows. This protein binds specifically to 23S rRNA; its binding is stimulated by other ribosomal proteins, e.g. L4, L17, and L20. It is important during the early stages of 50S assembly. It makes multiple contacts with different domains of the 23S rRNA in the assembled 50S subunit and ribosome. In terms of biological role, the globular domain of the protein is located near the polypeptide exit tunnel on the outside of the subunit, while an extended beta-hairpin is found that lines the wall of the exit tunnel in the center of the 70S ribosome. This chain is Large ribosomal subunit protein uL22, found in Alkaliphilus metalliredigens (strain QYMF).